Here is an 85-residue protein sequence, read N- to C-terminus: MNYLVMISLALLLMTGVESARDAYIANDRNCVYTCALNPYCDSECKKNGADSGYCQWFGRFGNACWCKNLPDKVPIRIPGECRGR.

The signal sequence occupies residues 1–19 (MNYLVMISLALLLMTGVES). One can recognise an LCN-type CS-alpha/beta domain in the interval 21 to 83 (RDAYIANDRN…VPIRIPGECR (63 aa)). 4 disulfides stabilise this stretch: Cys-31-Cys-82, Cys-35-Cys-55, Cys-41-Cys-65, and Cys-45-Cys-67. Arg-83 bears the Arginine amide mark.

This sequence belongs to the long (4 C-C) scorpion toxin superfamily. Sodium channel inhibitor family. Alpha subfamily. Expressed by the venom gland.

The protein resides in the secreted. In terms of biological role, alpha toxins bind voltage-independently at site-3 of sodium channels (Nav) and inhibit the inactivation of the activated channels, thereby blocking neuronal transmission. This toxin inhibits inactivation of Nav1.4/SCN4A (EC(50)=2.23 uM) and drosophila DmNav1 (EC(50)=220 nM). The toxin (1 uM) does not significantly shift the midpoint of activation at the two channels, but induces a significant depolarizing shift in the V(1/2) of inactivation of the channels. In addition, the toxin accelerates the recovery from fast inactivation in Nav1.4/SCN4A and DmNav1. It also shows antimicrobial activity. In Mesobuthus eupeus (Lesser Asian scorpion), this protein is Sodium channel neurotoxin MeuNaTxalpha-2.